Here is a 167-residue protein sequence, read N- to C-terminus: Thioredoxin Y2, chloroplastic (167 aa).

The transit peptide at 1–58 (MAISLATAYISPCFTPESSNSASPSRTLSSVRLPSQIRRFGSVQSPSSSTRFAPLTVR) directs the protein to the chloroplast. Residues 59–164 (AAKKQTFNSF…LVERIENSLQ (106 aa)) form the Thioredoxin domain. Catalysis depends on nucleophile residues cysteine 88 and cysteine 91. The cysteines at positions 88 and 91 are disulfide-linked.

It belongs to the thioredoxin family. Plant Y-type subfamily. Expressed in leaves.

It is found in the plastid. The protein resides in the chloroplast stroma. Thiol-disulfide oxidoreductase that poorly activates chloroplastic malate dehydrogenase (NADP-MDH) and fructose-1,6-bisphosphatase. Provides reducing equivalents for peroxiredoxin Q. The sequence is that of Thioredoxin Y2, chloroplastic from Arabidopsis thaliana (Mouse-ear cress).